The chain runs to 355 residues: MDDNKKRALAAALGQIERQFGKGAVMRMGDQERQGIPAISTGSLGLDIALGIGGLPKGRIVEIYGPESSGKTTLTLSVIAEAQKNGATCAFVDAEHALDPEYAGKLGVNVDDLLVSQPDTGEQALEITDMLVRSNAVDVIIVDSVAALVPKAEIEGEMGDMHVGLQARLMSQALRKITGNIKNANCLVIFINQIRMKIGVMFGSPETTTGGNALKFYASVRLDIRRTGAVKEGDEVVGSETRVKIVKNKVSPPFRQAEFQILYGKGIYRNGEIIDLGVSQGLVEKSGAWYAYQGNKIGQGKANAAKYLAENPAIGAEIEKQIREKLLKAGAAAEAGKAAAVDASADDVADAEAGY.

ATP is bound at residue 65–72 (GPESSGKT).

The protein belongs to the RecA family.

Its subcellular location is the cytoplasm. Functionally, can catalyze the hydrolysis of ATP in the presence of single-stranded DNA, the ATP-dependent uptake of single-stranded DNA by duplex DNA, and the ATP-dependent hybridization of homologous single-stranded DNAs. It interacts with LexA causing its activation and leading to its autocatalytic cleavage. This is Protein RecA from Pseudomonas putida (strain GB-1).